The chain runs to 473 residues: Ribulose bisphosphate carboxylase large chain (473 aa).

Asparagine 116 and threonine 166 together coordinate substrate. Lysine 168 (proton acceptor) is an active-site residue. Residue lysine 170 participates in substrate binding. Mg(2+)-binding residues include lysine 194, aspartate 196, and glutamate 197. Residue lysine 194 is modified to N6-carboxylysine. Catalysis depends on histidine 287, which acts as the Proton acceptor. Substrate-binding residues include arginine 288, histidine 320, and serine 372.

Belongs to the RuBisCO large chain family. Type I subfamily. In terms of assembly, heterohexadecamer of 8 large chains and 8 small chains. Mg(2+) serves as cofactor.

It carries out the reaction 2 (2R)-3-phosphoglycerate + 2 H(+) = D-ribulose 1,5-bisphosphate + CO2 + H2O. The enzyme catalyses D-ribulose 1,5-bisphosphate + O2 = 2-phosphoglycolate + (2R)-3-phosphoglycerate + 2 H(+). In terms of biological role, ruBisCO catalyzes two reactions: the carboxylation of D-ribulose 1,5-bisphosphate, the primary event in carbon dioxide fixation, as well as the oxidative fragmentation of the pentose substrate. Both reactions occur simultaneously and in competition at the same active site. This Nitrosospira sp. (strain TCH716) protein is Ribulose bisphosphate carboxylase large chain.